A 178-amino-acid chain; its full sequence is MAKLHDYYKSSVVAELTKEFSYTSVMQVPRVEKITLNMGVGEAINDKKLLENAAADMAIISGQKPLITKARKSVAGFKIREGYPIGCKVTLRGERMWEFLERLISIALPRVRDFRGVSAKSFDGRGNYSMGVREQIIFPEIDYDKVDRVRGLDITITTSANTDAEGRALLAAFNFPIP.

Belongs to the universal ribosomal protein uL5 family. In terms of assembly, part of the 50S ribosomal subunit; part of the 5S rRNA/L5/L18/L25 subcomplex. Contacts the 5S rRNA and the P site tRNA. Forms a bridge to the 30S subunit in the 70S ribosome.

Functionally, this is one of the proteins that bind and probably mediate the attachment of the 5S RNA into the large ribosomal subunit, where it forms part of the central protuberance. In the 70S ribosome it contacts protein S13 of the 30S subunit (bridge B1b), connecting the 2 subunits; this bridge is implicated in subunit movement. Contacts the P site tRNA; the 5S rRNA and some of its associated proteins might help stabilize positioning of ribosome-bound tRNAs. This Aliivibrio fischeri (strain ATCC 700601 / ES114) (Vibrio fischeri) protein is Large ribosomal subunit protein uL5.